The following is a 276-amino-acid chain: 2-dehydro-3-deoxyphosphooctonate aldolase (276 aa).

This sequence belongs to the KdsA family.

It is found in the cytoplasm. It carries out the reaction D-arabinose 5-phosphate + phosphoenolpyruvate + H2O = 3-deoxy-alpha-D-manno-2-octulosonate-8-phosphate + phosphate. Its pathway is carbohydrate biosynthesis; 3-deoxy-D-manno-octulosonate biosynthesis; 3-deoxy-D-manno-octulosonate from D-ribulose 5-phosphate: step 2/3. It participates in bacterial outer membrane biogenesis; lipopolysaccharide biosynthesis. This chain is 2-dehydro-3-deoxyphosphooctonate aldolase, found in Helicobacter pylori (strain HPAG1).